Consider the following 491-residue polypeptide: Trigger factor (491 aa).

Positions 169–254 (GDRVTIDYLG…VKDVAAAAPI (86 aa)) constitute a PPIase FKBP-type domain. Residues 434-491 (KVSKEELTAEDDADEKPAKKTASKKKAAAKADAAEGEEAAAPKRKAPAKKKASDESAE) form a disordered region. Residues 452–461 (KKTASKKKAA) show a composition bias toward basic residues.

It belongs to the FKBP-type PPIase family. Tig subfamily.

The protein resides in the cytoplasm. The catalysed reaction is [protein]-peptidylproline (omega=180) = [protein]-peptidylproline (omega=0). Involved in protein export. Acts as a chaperone by maintaining the newly synthesized protein in an open conformation. Functions as a peptidyl-prolyl cis-trans isomerase. The polypeptide is Trigger factor (Sinorhizobium medicae (strain WSM419) (Ensifer medicae)).